A 381-amino-acid chain; its full sequence is Homoserine O-succinyltransferase (381 aa).

One can recognise an AB hydrolase-1 domain in the interval N45–D360. The Nucleophile role is filled by S151. A substrate-binding site is contributed by R221. Catalysis depends on residues D321 and H354. A substrate-binding site is contributed by D355.

Belongs to the AB hydrolase superfamily. MetX family. As to quaternary structure, homodimer.

It is found in the cytoplasm. The enzyme catalyses L-homoserine + succinyl-CoA = O-succinyl-L-homoserine + CoA. It participates in amino-acid biosynthesis; L-methionine biosynthesis via de novo pathway; O-succinyl-L-homoserine from L-homoserine: step 1/1. Functionally, transfers a succinyl group from succinyl-CoA to L-homoserine, forming succinyl-L-homoserine. The polypeptide is Homoserine O-succinyltransferase (Paraburkholderia xenovorans (strain LB400)).